The following is a 331-amino-acid chain: Phosphoribosylformylglycinamidine cyclo-ligase (331 aa).

The protein belongs to the AIR synthase family.

The protein localises to the cytoplasm. The enzyme catalyses 2-formamido-N(1)-(5-O-phospho-beta-D-ribosyl)acetamidine + ATP = 5-amino-1-(5-phospho-beta-D-ribosyl)imidazole + ADP + phosphate + H(+). It participates in purine metabolism; IMP biosynthesis via de novo pathway; 5-amino-1-(5-phospho-D-ribosyl)imidazole from N(2)-formyl-N(1)-(5-phospho-D-ribosyl)glycinamide: step 2/2. The sequence is that of Phosphoribosylformylglycinamidine cyclo-ligase from Clostridium botulinum (strain ATCC 19397 / Type A).